The following is a 201-amino-acid chain: ATP-dependent Clp protease proteolytic subunit (201 aa).

Ser-98 serves as the catalytic Nucleophile. His-123 is an active-site residue.

It belongs to the peptidase S14 family. As to quaternary structure, fourteen ClpP subunits assemble into 2 heptameric rings which stack back to back to give a disk-like structure with a central cavity, resembling the structure of eukaryotic proteasomes.

It is found in the cytoplasm. The catalysed reaction is Hydrolysis of proteins to small peptides in the presence of ATP and magnesium. alpha-casein is the usual test substrate. In the absence of ATP, only oligopeptides shorter than five residues are hydrolyzed (such as succinyl-Leu-Tyr-|-NHMec, and Leu-Tyr-Leu-|-Tyr-Trp, in which cleavage of the -Tyr-|-Leu- and -Tyr-|-Trp bonds also occurs).. Functionally, cleaves peptides in various proteins in a process that requires ATP hydrolysis. Has a chymotrypsin-like activity. Plays a major role in the degradation of misfolded proteins. The polypeptide is ATP-dependent Clp protease proteolytic subunit (Rickettsia canadensis (strain McKiel)).